Consider the following 181-residue polypeptide: Shikimate kinase (181 aa).

Position 11–16 (11–16) interacts with ATP; it reads GAGKSK. S15 is a binding site for Mg(2+). The substrate site is built by D33, R58, and G80. R128 serves as a coordination point for ATP. Residue R144 coordinates substrate.

Belongs to the shikimate kinase family. Monomer. Mg(2+) is required as a cofactor.

It localises to the cytoplasm. The enzyme catalyses shikimate + ATP = 3-phosphoshikimate + ADP + H(+). The protein operates within metabolic intermediate biosynthesis; chorismate biosynthesis; chorismate from D-erythrose 4-phosphate and phosphoenolpyruvate: step 5/7. Its function is as follows. Catalyzes the specific phosphorylation of the 3-hydroxyl group of shikimic acid using ATP as a cosubstrate. The sequence is that of Shikimate kinase from Leptospira biflexa serovar Patoc (strain Patoc 1 / Ames).